The sequence spans 556 residues: Phosphomethylpyrimidine synthase (556 aa).

Residues Asn-191, Met-220, Tyr-249, His-285, Ser-305 to Gly-307, Asp-346 to Arg-349, and Glu-385 contribute to the substrate site. His-389 serves as a coordination point for Zn(2+). Position 412 (Tyr-412) interacts with substrate. A Zn(2+)-binding site is contributed by His-453. The [4Fe-4S] cluster site is built by Cys-535, Cys-538, and Cys-543.

Belongs to the ThiC family. [4Fe-4S] cluster serves as cofactor.

It carries out the reaction 5-amino-1-(5-phospho-beta-D-ribosyl)imidazole + S-adenosyl-L-methionine = 4-amino-2-methyl-5-(phosphooxymethyl)pyrimidine + CO + 5'-deoxyadenosine + formate + L-methionine + 3 H(+). It functions in the pathway cofactor biosynthesis; thiamine diphosphate biosynthesis. In terms of biological role, catalyzes the synthesis of the hydroxymethylpyrimidine phosphate (HMP-P) moiety of thiamine from aminoimidazole ribotide (AIR) in a radical S-adenosyl-L-methionine (SAM)-dependent reaction. The protein is Phosphomethylpyrimidine synthase of Chlorobaculum tepidum (strain ATCC 49652 / DSM 12025 / NBRC 103806 / TLS) (Chlorobium tepidum).